Reading from the N-terminus, the 301-residue chain is Acetyl-coenzyme A carboxylase carboxyl transferase subunit beta (301 aa).

The 270-residue stretch at 25–294 (LWIKCPETGE…SAANDVTRGA (270 aa)) folds into the CoA carboxyltransferase N-terminal domain.

The protein belongs to the AccD/PCCB family. Acetyl-CoA carboxylase is a heterohexamer composed of biotin carboxyl carrier protein (AccB), biotin carboxylase (AccC) and two subunits each of ACCase subunit alpha (AccA) and ACCase subunit beta (AccD).

The protein localises to the cytoplasm. The catalysed reaction is N(6)-carboxybiotinyl-L-lysyl-[protein] + acetyl-CoA = N(6)-biotinyl-L-lysyl-[protein] + malonyl-CoA. It functions in the pathway lipid metabolism; malonyl-CoA biosynthesis; malonyl-CoA from acetyl-CoA: step 1/1. In terms of biological role, component of the acetyl coenzyme A carboxylase (ACC) complex. Biotin carboxylase (BC) catalyzes the carboxylation of biotin on its carrier protein (BCCP) and then the CO(2) group is transferred by the transcarboxylase to acetyl-CoA to form malonyl-CoA. The sequence is that of Acetyl-coenzyme A carboxylase carboxyl transferase subunit beta from Rhizobium etli (strain ATCC 51251 / DSM 11541 / JCM 21823 / NBRC 15573 / CFN 42).